Reading from the N-terminus, the 2131-residue chain is Nonribosomal peptide synthetase criC (2131 aa).

The tract at residues 13 to 407 (FSQQCFQHPD…GRRDRVTKIR (395 aa)) is adenylation 1. The Carrier 1 domain maps to 525-601 (SGPLTIDQTI…ALVEKNRHET (77 aa)). Ser-562 carries the post-translational modification O-(pantetheine 4'-phosphoryl)serine. Residues 598-627 (RHETENRPDSSAFATRTPEESSMPTQGPVT) are disordered. Residues 625 to 1018 (PVTPLQKRMV…YMSLLDAFLD (394 aa)) form a condensation 1 region. An adenylation 2 region spans residues 1069-1447 (ASLHPTHIAV…GRKDRQVKVR (379 aa)). A Carrier 2 domain is found at 1569-1647 (SSEAHLEKLI…DLITLVAQQQ (79 aa)). Ser-1607 is subject to O-(pantetheine 4'-phosphoryl)serine. The segment at 1688 to 2086 (SQSQSTFNVP…EALLLECFRM (399 aa)) is condensation 2.

This sequence belongs to the NRP synthetase family. Pantetheine 4'-phosphate is required as a cofactor.

It carries out the reaction L-tryptophan + L-alanine + 2 ATP = cyclo(L-tryptophyl-L-alanyl) + 2 ADP + 2 phosphate + 2 H(+). It participates in secondary metabolite biosynthesis. The protein operates within alkaloid biosynthesis. Its function is as follows. Nonribosomal peptide synthetase; part of the gene cluster that mediates the biosynthesis of echinulin family alkaloid. The pathway begins with the biosynthesis of the cyclic dipeptide cyclo-L-Trp-L-Ala (cyclo-TA) by the NRPS criC via condensation of L-alanine and L-tryptophan. The prenyltransferase criA then catalyzes the first prenylation step, a reverse prenylation reaction at C2, to yield preechinulin. Preechinulin is the substrate of the cytochrome P450 monooxygenase criE that catalyzes the formation of the double bond between C10 and C11 to produce neoechulin A. The unique prenyltransferase criF functions as a competitive enzyme with criE for preechinulin metabolization and uses preechinulin for effective regiospecific prenylations. Preechinulin is prenylated by criF at C5 or C7. C7-prenylation leads to accumulation of tardioxopiperazine B without further modification by criF. In contrast, the C5-prenylated tardioxopiperazine A can be prenylated again by criF, predominantly at C7 to form echinulin or less frequently at C4 to give variecolorin L. CriF also accepts neoechilunin A to produce varlecolorin G (prenylation at C5) or isoechinulin A (prenylation at C7). CriF further converts isoechinulin A into dehydroechinulin. Moreover, a yet unidentified enzyme can also convert neoechilunin A into neoechilunin B by introducing a double bond between positions C14 and C17 and thus provides a further substrate to criF for C5 and C7 prenylation. The sequence is that of Nonribosomal peptide synthetase criC from Aspergillus cristatus (Chinese Fuzhuan brick tea-fermentation fungus).